The primary structure comprises 292 residues: Putative two-component response regulator-like APRR4 (292 aa).

The Response regulatory domain occupies 43-158; that stretch reads RVLVFDEDPS…DLRIVFKHLV (116 aa). The tract at residues 168–215 is disordered; the sequence is VTGEAEKAAGEKSSSVGDSTIRNPNKSKRSSCLEAEVNEEDRHDHNDR. Positions 179–191 are enriched in polar residues; sequence KSSSVGDSTIRNP. Residues 225–275 constitute a DNA-binding region (myb-like GARP); that stretch reads RVVWDEELHQNFLNAVDFLGLERAVPKKILDVMKVDYISRENVASHLQVTF.

It belongs to the ARR-like family. In terms of assembly, binds the target DNA as a monomer.

The protein localises to the nucleus. Transcriptional activator that binds specifically to the DNA sequence 5'-[AG]GATT-3'. The chain is Putative two-component response regulator-like APRR4 (APRR4) from Arabidopsis thaliana (Mouse-ear cress).